We begin with the raw amino-acid sequence, 261 residues long: 5'-nucleotidase SurE (261 aa).

Asp8, Asp9, Ser43, and Asn96 together coordinate a divalent metal cation.

Belongs to the SurE nucleotidase family. It depends on a divalent metal cation as a cofactor.

Its subcellular location is the cytoplasm. The catalysed reaction is a ribonucleoside 5'-phosphate + H2O = a ribonucleoside + phosphate. Functionally, nucleotidase that shows phosphatase activity on nucleoside 5'-monophosphates. The sequence is that of 5'-nucleotidase SurE from Dinoroseobacter shibae (strain DSM 16493 / NCIMB 14021 / DFL 12).